Here is a 540-residue protein sequence, read N- to C-terminus: CTP synthase (540 aa).

Residues 1-267 (MKIMKFIFIT…GKLVTKKLNL (267 aa)) are amidoligase domain. Serine 15 provides a ligand contact to CTP. Serine 15 is a binding site for UTP. Residue 16 to 21 (SLGKGI) participates in ATP binding. Tyrosine 56 serves as a coordination point for L-glutamine. Aspartate 73 contributes to the ATP binding site. Positions 73 and 141 each coordinate Mg(2+). Residues 148-150 (DIE), 188-193 (KTKPTQ), and lysine 224 contribute to the CTP site. Residues 188–193 (KTKPTQ) and lysine 224 contribute to the UTP site. An ATP-binding site is contributed by 240–242 (RDA). In terms of domain architecture, Glutamine amidotransferase type-1 spans 292-540 (TIGIVGKYVE…VRASLGEKIK (249 aa)). L-glutamine is bound at residue glycine 360. Cysteine 387 functions as the Nucleophile; for glutamine hydrolysis in the catalytic mechanism. L-glutamine-binding positions include 388–391 (MGMQ), glutamate 411, and arginine 468. Residues histidine 513 and glutamate 515 contribute to the active site.

The protein belongs to the CTP synthase family. In terms of assembly, homotetramer.

The catalysed reaction is UTP + L-glutamine + ATP + H2O = CTP + L-glutamate + ADP + phosphate + 2 H(+). It carries out the reaction L-glutamine + H2O = L-glutamate + NH4(+). The enzyme catalyses UTP + NH4(+) + ATP = CTP + ADP + phosphate + 2 H(+). It functions in the pathway pyrimidine metabolism; CTP biosynthesis via de novo pathway; CTP from UDP: step 2/2. Its activity is regulated as follows. Allosterically activated by GTP, when glutamine is the substrate; GTP has no effect on the reaction when ammonia is the substrate. The allosteric effector GTP functions by stabilizing the protein conformation that binds the tetrahedral intermediate(s) formed during glutamine hydrolysis. Inhibited by the product CTP, via allosteric rather than competitive inhibition. Its function is as follows. Catalyzes the ATP-dependent amination of UTP to CTP with either L-glutamine or ammonia as the source of nitrogen. Regulates intracellular CTP levels through interactions with the four ribonucleotide triphosphates. The protein is CTP synthase of Methanocaldococcus jannaschii (strain ATCC 43067 / DSM 2661 / JAL-1 / JCM 10045 / NBRC 100440) (Methanococcus jannaschii).